The primary structure comprises 388 residues: Succinate--CoA ligase [ADP-forming] subunit beta (388 aa).

Residues 9 to 244 enclose the ATP-grasp domain; it reads KEILRKYNVP…LDEEDANEIE (236 aa). Residues Lys46, 53-55, Glu99, Ala102, and Glu107 each bind ATP; that span reads GRG. Mg(2+) contacts are provided by Asn199 and Asp213. Substrate-binding positions include Asn264 and 321–323; that span reads GIM.

Belongs to the succinate/malate CoA ligase beta subunit family. As to quaternary structure, heterotetramer of two alpha and two beta subunits. Mg(2+) is required as a cofactor.

The enzyme catalyses succinate + ATP + CoA = succinyl-CoA + ADP + phosphate. It catalyses the reaction GTP + succinate + CoA = succinyl-CoA + GDP + phosphate. The protein operates within carbohydrate metabolism; tricarboxylic acid cycle; succinate from succinyl-CoA (ligase route): step 1/1. Its function is as follows. Succinyl-CoA synthetase functions in the citric acid cycle (TCA), coupling the hydrolysis of succinyl-CoA to the synthesis of either ATP or GTP and thus represents the only step of substrate-level phosphorylation in the TCA. The beta subunit provides nucleotide specificity of the enzyme and binds the substrate succinate, while the binding sites for coenzyme A and phosphate are found in the alpha subunit. The chain is Succinate--CoA ligase [ADP-forming] subunit beta from Ralstonia nicotianae (strain ATCC BAA-1114 / GMI1000) (Ralstonia solanacearum).